The primary structure comprises 107 residues: MFNSEIFILEFFIVYALTASTIKIGKITKLTHEVFDHSVENGTLVRQWYIRFSLCHTSISFTQLQKIFSRFRHYVIVQLKNYTALGFTSNRNIKKSFRSSHFYSLIA.

This is an uncharacterized protein from Saccharomyces cerevisiae (strain ATCC 204508 / S288c) (Baker's yeast).